Consider the following 291-residue polypeptide: Homeobox protein SIX2 (291 aa).

Residues 124-183 (GEETSYCFKEKSRSVLREWYAHNPYPSPREKRELAEATGLTTTQVSNWFKNRRQRDRAAE) constitute a DNA-binding region (homeobox). Residues 168–279 (VSNWFKNRRQ…HHHGLQDSIL (112 aa)) form a disordered region. Residues 179-190 (DRAAEAKERENN) are compositionally biased toward basic and acidic residues. Residues 224 to 233 (HSSSSPALLL) show a composition bias toward low complexity. The segment covering 249-259 (PPGPSAVPVPV) has biased composition (pro residues).

It belongs to the SIX/Sine oculis homeobox family. Interacts with TCF7L2; in a canonical Wnt signaling independent manner; prevents transcription of differentiation genes in cap mesenchyme. Interacts with OSR1; form a strong repressor complex with TCF7L2, TLE2 and TLE3 to prevent the activation of Wnt/beta-catenin target genes in the cap mesenchyme. Interacts with HOXA11, EYA1 and EYA3. In terms of tissue distribution, strongly expressed in skeletal muscle. Expressed in Wilms' tumor and in the cap mesenchyme of fetal kidney (at protein level).

The protein resides in the nucleus. Functionally, transcription factor that plays an important role in the development of several organs, including kidney, skull and stomach. During kidney development, maintains cap mesenchyme multipotent nephron progenitor cells in an undifferentiated state by opposing the inductive signals emanating from the ureteric bud and cooperates with WNT9B to promote renewing progenitor cells proliferation. Acts through its interaction with TCF7L2 and OSR1 in a canonical Wnt signaling independent manner preventing transcription of differentiation genes in cap mesenchyme such as WNT4. Also acts independently of OSR1 to activate expression of many cap mesenchyme genes, including itself, GDNF and OSR1. During craniofacial development plays a role in growth and elongation of the cranial base through regulation of chondrocyte differentiation. During stomach organogenesis, controls pyloric sphincter formation and mucosal growth through regulation of a gene network including NKX2-5, BMPR1B, BMP4, SOX9 and GREM1. During branchial arch development, acts to mediate HOXA2 control over the insulin-like growth factor pathway. May also be involved in limb tendon and ligament development. Plays a role in cell proliferation and migration. This is Homeobox protein SIX2 (SIX2) from Homo sapiens (Human).